The primary structure comprises 503 residues: Podocalyxin (503 aa).

The first 21 residues, 1-21, serve as a signal peptide directing secretion; sequence MPPTTALSALLLLLLSPASHS. Positions 19–236 are disordered; the sequence is SHSHNGNETS…PLTSQTPGIT (218 aa). Polar residues predominate over residues 20-50; the sequence is HSHNGNETSTSAIKSSTVQSHQSATTSTEVT. At 22–404 the chain is on the extracellular side; sequence HNGNETSTSA…PPEVNEDRFS (383 aa). Asparagine 25, asparagine 89, and asparagine 94 each carry an N-linked (GlcNAc...) asparagine glycan. The span at 61–91 shows a compositional bias: low complexity; that stretch reads STQPSNPTPFTTSTQSPSMPTSTPNPTSNQS. Positions 107-126 are enriched in low complexity; it reads TSSPSSTAFTSSSGQTASSG. Residues 131–183 show a composition bias toward polar residues; that stretch reads DSFTTAPTTTLGLINVSSQPTDLNTTSKLLSTPTTDNTTSPQQPVDSSPSTAS. Residues asparagine 145, asparagine 154, asparagine 167, and asparagine 206 are each glycosylated (N-linked (GlcNAc...) asparagine). The segment covering 196 to 208 has biased composition (low complexity); the sequence is SSSGSTPSTDNST. Polar residues predominate over residues 222-236; sequence SEATQPLTSQTPGIT. An N-linked (GlcNAc...) asparagine glycan is attached at asparagine 303. Residues 405-425 form a helical membrane-spanning segment; that stretch reads LPLIITIVCMASFLLLVAALY. Residues 426–503 are Cytoplasmic-facing; it reads GCCHQRISQR…DLDEEEDTHL (78 aa). Threonine 463 carries the phosphothreonine modification. Serine 482 is subject to Phosphoserine. Position 501 is a phosphothreonine (threonine 501).

The protein belongs to the podocalyxin family. As to quaternary structure, monomer; when associated with the membrane raft. Oligomer; when integrated in the apical membrane. Found in a complex with EZR, PODXL and NHERF2. Associates with the actin cytoskeleton through complex formation with EZR and NHERF2. Interacts (via the C-terminal PDZ-binding motif DTHL) with NHERF1 (via the PDZ domains); interaction is not detected in glomerular epithelium cells, take place early in the secretory pathway and is necessary for its apical membrane sorting. Interacts (via the C-terminal PDZ-binding motif DTHL) with NHERF2 (via the PDZ 1 domain); interaction is detected in glomerular epithelium cells. Interacts with EZR. Post-translationally, N- and O-linked glycosylated. Sialoglycoprotein. In terms of tissue distribution, expressed in liver cells and hematopoietic cells (at protein level). Glomerular epithelium cell (podocyte).

It is found in the apical cell membrane. The protein resides in the cell projection. It localises to the microvillus. Its subcellular location is the membrane raft. The protein localises to the lamellipodium. It is found in the filopodium. The protein resides in the ruffle. It localises to the membrane. In terms of biological role, involved in the regulation of both adhesion and cell morphology and cancer progression. Functions as an anti-adhesive molecule that maintains an open filtration pathway between neighboring foot processes in the podocyte by charge repulsion. Acts as a pro-adhesive molecule, enhancing the adherence of cells to immobilized ligands, increasing the rate of migration and cell-cell contacts in an integrin-dependent manner. Induces the formation of apical actin-dependent microvilli. Involved in the formation of a preapical plasma membrane subdomain to set up initial epithelial polarization and the apical lumen formation during renal tubulogenesis. Plays a role in cancer development and aggressiveness by inducing cell migration and invasion through its interaction with the actin-binding protein EZR. Affects EZR-dependent signaling events, leading to increased activities of the MAPK and PI3K pathways in cancer cells. This is Podocalyxin (Podxl) from Mus musculus (Mouse).